We begin with the raw amino-acid sequence, 30 residues long: Photosystem I reaction center subunit XII (30 aa).

Residues 7 to 26 form a helical membrane-spanning segment; that stretch reads IFVALLFALVSAVLAIRLGT.

Belongs to the PsaM family.

The protein localises to the plastid. Its subcellular location is the chloroplast thylakoid membrane. The polypeptide is Photosystem I reaction center subunit XII (Gracilaria tenuistipitata var. liui (Red alga)).